A 575-amino-acid polypeptide reads, in one-letter code: MPSAKQRGSKGGHGAASPSDKGAHPSGGADDVAKKPPAAPQQPQPPAPHPPQHPQNQAHRGGHRGRSSAATANASSASCSRRLGRVLNFLFYLSLVAAAAFSGWYVHHVLEEVQQVRRGHQDFSRQRDELGQGLQGVEQKVQSLQATFGTFESLLRNSQHKQDLTEKAVKEGESELNRISEVLQKLQNEILKDLSDGIHVVKDARERDFTSLENTVEERLTELTKSINDNIAIFTDVQKRSQKEINEVKMKVASLEESKGDRSQDVKTLKDAVKEVQASMMSRERDIEALKSSLQTMESDVYTEVRELVSLKQEQQAFKQAADSERLALQALTEKLLRSEESSSRLPEDIRRLEEELQQLKVGAHGSEEGAVFKDSKALEELQRQIEGLGARLQYVEDGVYSMQVASARHTESLESLLSKSQEYEQRLAMLQEHVGNLGSSSDLASTVRSLGETQLALSSDLKELKQSLGELPGTVESLQEQVLSLLSQDQAQAEGLPPQDFLDRLSSLDNLKSSVSQVESDLKMLRTAVDSLVAYSVKIETNENNLESAKGLLDDLRNDLDRLFLKVEKIHEKI.

The tract at residues 1-73 (MPSAKQRGSK…RGRSSAATAN (73 aa)) is disordered. The Cytoplasmic segment spans residues 1-85 (MPSAKQRGSK…SASCSRRLGR (85 aa)). Residues serine 3, serine 17, and serine 19 each carry the phosphoserine modification. N6-acetyllysine is present on lysine 21. Over residues 37–53 (PAAPQQPQPPAPHPPQH) the composition is skewed to pro residues. A lipid anchor (S-palmitoyl cysteine; by ZDHHC2) is attached at cysteine 79. The helical transmembrane segment at 86-108 (VLNFLFYLSLVAAAAFSGWYVHH) threads the bilayer. Over 109–575 (VLEEVQQVRR…LKVEKIHEKI (467 aa)) the chain is Extracellular. Positions 125–193 (RQRDELGQGL…QKLQNEILKD (69 aa)) form a coiled coil. Residues serine 211, serine 292, and serine 367 each carry the phosphoserine modification. Coiled coils occupy residues 236-438 (DVQK…VGNL) and 507-575 (SSLD…HEKI).

As to quaternary structure, interacts with REEP5. In terms of processing, reversibly palmitoylated. Palmitoylation at Cys-79 by DHHC2 is required for its trafficking from the ER to the plasma membrane and for its perinuclear localization. Post-translationally, increased phosphorylation during mitosis prevents binding to microtubules. As to expression, expressed in cardiomyocytes (at protein level).

It localises to the endoplasmic reticulum membrane. It is found in the cell membrane. The protein localises to the cytoplasm. Its subcellular location is the cytoskeleton. The protein resides in the perinuclear region. Functionally, high-affinity epithelial cell surface receptor for APF. In terms of biological role, mediates the anchoring of the endoplasmic reticulum to microtubules. The sequence is that of Cytoskeleton-associated protein 4 (Ckap4) from Mus musculus (Mouse).